We begin with the raw amino-acid sequence, 502 residues long: UPF0371 protein CLL_A2797 (502 aa).

Belongs to the UPF0371 family.

In Clostridium botulinum (strain Eklund 17B / Type B), this protein is UPF0371 protein CLL_A2797.